The sequence spans 344 residues: Meiotically up-regulated gene 10 protein (344 aa).

The DH domain maps to 48–207; the sequence is EFNSILQEII…RELCSYIDQE (160 aa).

It localises to the cytoplasm. The protein resides in the nucleus. Has a role in meiosis. This Schizosaccharomyces pombe (strain 972 / ATCC 24843) (Fission yeast) protein is Meiotically up-regulated gene 10 protein (mug10).